The chain runs to 435 residues: Actin-like protein 7A (435 aa).

2 disordered regions span residues 1–20 (MWAP…VGNQ) and 29–65 (QTAS…ERPK). The required for interaction with TES stretch occupies residues 31 to 51 (ASLRDGPAKRAVWVRRRSSEP). Positions 47–65 (RSSEPQEPTESKAAKERPK) are enriched in basic and acidic residues.

The protein belongs to the actin family. Interacts (via N-terminus) with TES (via LIM domain 2). Heterodimer with TES; the heterodimer interacts with ENAH to form a heterotrimer. Interacts with ACTL9. Interacts with CYLC1; the interaction may be relevant for proper acrosome attachment to the nuclear envelope.

It localises to the cytoplasm. The protein localises to the cytoskeleton. It is found in the golgi apparatus. The protein resides in the nucleus. Its function is as follows. Essential for normal spermatogenesis and male fertility. Required for normal sperm head morphology, acroplaxome formation, acrosome attachment, and acrosome granule stability. May anchor and stabilize acrosomal adherence to the acroplaxome at least in part by facilitating the presence of F-actin in the subacrosomal space. May play an important role in formation and fusion of Golgi-derived vesicles during acrosome biogenesis. The polypeptide is Actin-like protein 7A (ACTL7A) (Macaca fascicularis (Crab-eating macaque)).